The following is a 105-amino-acid chain: TYVIAQPCVDVKDKACIEECPVDCIYEGQRSLYIHPDECVDCGACEPVCPVEAIFYEDDTPEEWKDYYKANVEFFDDLGSPGGASKLGLIERDHPFVAGLPPQNA.

[3Fe-4S] cluster is bound by residues cysteine 8 and cysteine 16. [4Fe-4S] cluster contacts are provided by cysteine 20, cysteine 39, cysteine 42, and cysteine 45. The region spanning 30 to 59 (RSLYIHPDECVDCGACEPVCPVEAIFYEDD) is the 4Fe-4S ferredoxin-type domain. Residue cysteine 49 coordinates [3Fe-4S] cluster.

The cofactor is [4Fe-4S] cluster. [3Fe-4S] cluster serves as cofactor.

Its function is as follows. Ferredoxins are iron-sulfur proteins that transfer electrons in a wide variety of metabolic reactions. Putative electron transport protein for the cytochrome P-450SOY system from the same organism. This chain is Ferredoxin, found in Streptomyces griseus.